A 197-amino-acid chain; its full sequence is Na(+)-translocating NADH-quinone reductase subunit E (197 aa).

The next 6 membrane-spanning stretches (helical) occupy residues 11–31 (SVFI…FLAV), 35–55 (VSTA…SVPV), 76–96 (FLKF…LEMF), 108–128 (LGIY…VSFM), 139–159 (VVYG…LAGI), and 175–195 (LGIT…FSGI).

Belongs to the NqrDE/RnfAE family. In terms of assembly, composed of six subunits; NqrA, NqrB, NqrC, NqrD, NqrE and NqrF.

It is found in the cell inner membrane. The enzyme catalyses a ubiquinone + n Na(+)(in) + NADH + H(+) = a ubiquinol + n Na(+)(out) + NAD(+). NQR complex catalyzes the reduction of ubiquinone-1 to ubiquinol by two successive reactions, coupled with the transport of Na(+) ions from the cytoplasm to the periplasm. NqrA to NqrE are probably involved in the second step, the conversion of ubisemiquinone to ubiquinol. This chain is Na(+)-translocating NADH-quinone reductase subunit E, found in Neisseria meningitidis serogroup C (strain 053442).